We begin with the raw amino-acid sequence, 141 residues long: Hemoglobin subunit beta-C (141 aa).

One can recognise a Globin domain in the interval 1–141 (PNKALITGFW…VASALAHRYH (141 aa)). Heme b-binding residues include histidine 58 and histidine 87.

The protein belongs to the globin family. Heterotetramer of two alpha chains and two beta chains. In terms of tissue distribution, red blood cells.

Functionally, involved in oxygen transport from the lung to the various peripheral tissues. In Ovis aries musimon (Mouflon), this protein is Hemoglobin subunit beta-C (HBBC).